The primary structure comprises 289 residues: Glyceraldehyde-3-phosphate dehydrogenase (289 aa).

NAD(+) is bound by residues D12 and R57. D-glyceraldehyde 3-phosphate-binding positions include 128–130 (SCT), T159, 188–189 (TG), and R211. C129 acts as the Nucleophile in catalysis.

The protein belongs to the glyceraldehyde-3-phosphate dehydrogenase family. Homotetramer.

Its subcellular location is the cytoplasm. It carries out the reaction D-glyceraldehyde 3-phosphate + phosphate + NAD(+) = (2R)-3-phospho-glyceroyl phosphate + NADH + H(+). It functions in the pathway carbohydrate degradation; glycolysis; pyruvate from D-glyceraldehyde 3-phosphate: step 1/5. This is Glyceraldehyde-3-phosphate dehydrogenase (GPD) from Amanita muscaria (Fly agaric).